A 515-amino-acid polypeptide reads, in one-letter code: Maturase K (515 aa).

It belongs to the intron maturase 2 family. MatK subfamily.

The protein localises to the plastid. It localises to the chloroplast. Functionally, usually encoded in the trnK tRNA gene intron. Probably assists in splicing its own and other chloroplast group II introns. In Alpinia zerumbet (Shell ginger), this protein is Maturase K.